Consider the following 256-residue polypeptide: Hydroxyethylthiazole kinase (256 aa).

A substrate-binding site is contributed by methionine 38. 2 residues coordinate ATP: arginine 114 and threonine 159. Glycine 186 contributes to the substrate binding site.

The protein belongs to the Thz kinase family. It depends on Mg(2+) as a cofactor.

It carries out the reaction 5-(2-hydroxyethyl)-4-methylthiazole + ATP = 4-methyl-5-(2-phosphooxyethyl)-thiazole + ADP + H(+). Its pathway is cofactor biosynthesis; thiamine diphosphate biosynthesis; 4-methyl-5-(2-phosphoethyl)-thiazole from 5-(2-hydroxyethyl)-4-methylthiazole: step 1/1. Its function is as follows. Catalyzes the phosphorylation of the hydroxyl group of 4-methyl-5-beta-hydroxyethylthiazole (THZ). This Streptococcus agalactiae serotype Ia (strain ATCC 27591 / A909 / CDC SS700) protein is Hydroxyethylthiazole kinase.